A 303-amino-acid chain; its full sequence is Probable WRKY transcription factor 30 (303 aa).

The tract at residues 65–92 (DQVSQGGGSPKSDDSDQEPLVIKSSKKS) is disordered. Positions 107–175 (GVDRTLDDGF…YRGIHSCSQA (69 aa)) form a DNA-binding region, WRKY. Residues 266-278 (SGSASHSASNSPS) are compositionally biased toward low complexity. The segment at 266 to 291 (SGSASHSASNSPSTVPLESPFESYDP) is disordered.

The protein belongs to the WRKY group III family. As to quaternary structure, interacts with WRKY53, WRKY54 and WRKY70.

The protein resides in the nucleus. Functionally, transcription factor. Interacts specifically with the W box (5'-(T)TGAC[CT]-3'), a frequently occurring elicitor-responsive cis-acting element. This is Probable WRKY transcription factor 30 from Arabidopsis thaliana (Mouse-ear cress).